A 359-amino-acid polypeptide reads, in one-letter code: Type-1 angiotensin II receptor A (359 aa).

Residues 1–25 (MALNSSAEDGIKRIQDDCPKAGRHS) are Extracellular-facing. N-linked (GlcNAc...) asparagine glycosylation is present at asparagine 4. Angiotensin II contacts are provided by glutamine 15 and aspartate 17. Intrachain disulfides connect cysteine 18/cysteine 274 and cysteine 101/cysteine 180. Residues 26–55 (YIFVMIPTLYSIIFVVGIFGNSLVVIVIYF) form a helical membrane-spanning segment. Topologically, residues 56–61 (YMKLKT) are cytoplasmic. The chain crosses the membrane as a helical span at residues 62–89 (VASVFLLNLALADLCFLLTLPLWAVYTA). Residues 90–98 (MEYRWPFGN) lie on the Extracellular side of the membrane. The helical transmembrane segment at 99-125 (HLCKIASASVSFNLYASVFLLTCLSID) threads the bilayer. Residues 126-141 (RYLAIVHPMKSRLRRT) are Cytoplasmic-facing. The helical transmembrane segment at 142–165 (MLVAKVTCIIIWLMAGLASLPAVI) threads the bilayer. Residues 166–190 (HRNVYFIENTNITVCAFHYESRNST) lie on the Extracellular side of the membrane. Angiotensin II is bound at residue arginine 167. Asparagine 176 carries an N-linked (GlcNAc...) asparagine glycan. Positions 182, 183, and 184 each coordinate angiotensin II. N-linked (GlcNAc...) asparagine glycosylation is present at asparagine 188. Residues 191–216 (LPIGLGLTKNILGFLFPFLIILTSYT) traverse the membrane as a helical segment. Lysine 199 contacts angiotensin II. Residues 217–239 (LIWKALKKAYEIQKNKPRNDDIF) lie on the Cytoplasmic side of the membrane. Residues 240-268 (RIIMAIVLFFFFSWVPHQIFTFLDVLIQL) form a helical membrane-spanning segment. Residues 269–278 (GVIHDCKISD) are Extracellular-facing. Residues 279–304 (IVDTAMPITICIAYFNNCLNPLFYGF) form a helical membrane-spanning segment. Topologically, residues 305–359 (LGKKFKKYFLQLLKYIPPKAKSHSSLSTKMSTLSYRPSDNMSSSAKKPASCFEVE) are cytoplasmic. Positions 337–349 (LSYRPSDNMSSSA) are enriched in polar residues. The disordered stretch occupies residues 337 to 359 (LSYRPSDNMSSSAKKPASCFEVE). The S-palmitoyl cysteine moiety is linked to residue cysteine 355.

Belongs to the G-protein coupled receptor 1 family. As to quaternary structure, interacts with MAS1. Interacts with ARRB1. Interacts with FLNA (via filamin repeat 21); increases PKA-mediated phosphorylation of FLNA. C-terminal Ser or Thr residues may be phosphorylated. As to expression, is expressed in the liver, kidney, aorta, lung, uterus, ovary, spleen, heart, adrenal gland, and vascular smooth muscle cell.

Its subcellular location is the cell membrane. Functionally, receptor for angiotensin II, a vasoconstricting peptide, which acts as a key regulator of blood pressure and sodium retention by the kidney. The activated receptor in turn couples to G-alpha proteins G(q) (GNAQ, GNA11, GNA14 or GNA15) and thus activates phospholipase C and increases the cytosolic Ca(2+) concentrations, which in turn triggers cellular responses such as stimulation of protein kinase C. This Rattus norvegicus (Rat) protein is Type-1 angiotensin II receptor A (Agtr1).